A 321-amino-acid chain; its full sequence is Peroxidase 27 (321 aa).

Positions 1 to 23 are cleaved as a signal peptide; sequence MAASKRLVVSCLFLVLLFAQANS. 4 cysteine pairs are disulfide-bonded: C35–C113, C68–C73, C119–C317, and C196–C228. H66 serves as the catalytic Proton acceptor. Residues D67, V70, G72, D74, and S76 each contribute to the Ca(2+) site. P159 is a substrate binding site. N164 carries an N-linked (GlcNAc...) asparagine glycan. H189 provides a ligand contact to heme b. T190 is a Ca(2+) binding site. Residue N205 is glycosylated (N-linked (GlcNAc...) asparagine). The Ca(2+) site is built by D240, S243, and D248.

Belongs to the peroxidase family. Classical plant (class III) peroxidase subfamily. The cofactor is heme b. Requires Ca(2+) as cofactor. In terms of tissue distribution, expressed in the whole plant, but preferentially in roots and flowers.

The protein localises to the secreted. It catalyses the reaction 2 a phenolic donor + H2O2 = 2 a phenolic radical donor + 2 H2O. Its function is as follows. Removal of H(2)O(2), oxidation of toxic reductants, biosynthesis and degradation of lignin, suberization, auxin catabolism, response to environmental stresses such as wounding, pathogen attack and oxidative stress. These functions might be dependent on each isozyme/isoform in each plant tissue. This is Peroxidase 27 (PER27) from Arabidopsis thaliana (Mouse-ear cress).